A 757-amino-acid chain; its full sequence is Catalase-peroxidase (757 aa).

Residues 101–248 constitute a cross-link (tryptophyl-tyrosyl-methioninium (Trp-Tyr) (with M-274)); that stretch reads WHSAGTYRIG…LAAVQMGLIY (148 aa). The active-site Proton acceptor is His102. The interval 210–231 is disordered; it reads SEGVHHPDEHSGAKEKASKNSD. Positions 212–231 are enriched in basic and acidic residues; the sequence is GVHHPDEHSGAKEKASKNSD. A cross-link (tryptophyl-tyrosyl-methioninium (Tyr-Met) (with W-101)) is located at residues 248–274; it reads YVNPEGPDGRPDPLASARDIRETFARM. Position 289 (His289) interacts with heme b. The tract at residues 293–312 is disordered; that stretch reads KTHGAAPADNVGPEPEAGEL.

Belongs to the peroxidase family. Peroxidase/catalase subfamily. In terms of assembly, homodimer or homotetramer. Heme b serves as cofactor. Post-translationally, formation of the three residue Trp-Tyr-Met cross-link is important for the catalase, but not the peroxidase activity of the enzyme.

The enzyme catalyses H2O2 + AH2 = A + 2 H2O. It catalyses the reaction 2 H2O2 = O2 + 2 H2O. Functionally, bifunctional enzyme with both catalase and broad-spectrum peroxidase activity. The protein is Catalase-peroxidase of Xylella fastidiosa (strain M12).